Here is a 412-residue protein sequence, read N- to C-terminus: Phosphate-repressible acid phosphatase (412 aa).

The signal sequence occupies residues 1–19; it reads MLTKQTLLAFVGALALATG. 4 N-linked (GlcNAc...) asparagine glycosylation sites follow: N74, N121, N186, and N208. D215 (proton donor) is an active-site residue. N-linked (GlcNAc...) asparagine glycosylation is found at N217, N332, and N343.

In terms of processing, the N-terminus is blocked.

The protein localises to the secreted. The enzyme catalyses a phosphate monoester + H2O = an alcohol + phosphate. The protein is Phosphate-repressible acid phosphatase (PHOA) of Penicillium chrysogenum (Penicillium notatum).